A 113-amino-acid chain; its full sequence is Large ribosomal subunit protein bL19 (113 aa).

This sequence belongs to the bacterial ribosomal protein bL19 family.

In terms of biological role, this protein is located at the 30S-50S ribosomal subunit interface and may play a role in the structure and function of the aminoacyl-tRNA binding site. The protein is Large ribosomal subunit protein bL19 of Corynebacterium urealyticum (strain ATCC 43042 / DSM 7109).